Reading from the N-terminus, the 141-residue chain is Hemoglobin subunit alpha (141 aa).

The 141-residue stretch at 1–141 folds into the Globin domain; it reads VLSPADKTNV…VSTVLTSKYR (141 aa). S3 carries the phosphoserine modification. K7 carries the post-translational modification N6-succinyllysine. The residue at position 8 (T8) is a Phosphothreonine. K11 bears the N6-succinyllysine mark. K16 is subject to N6-acetyllysine; alternate. At K16 the chain carries N6-succinyllysine; alternate. The residue at position 24 (Y24) is a Phosphotyrosine. S35 is subject to Phosphoserine. K40 is subject to N6-succinyllysine. S49 is subject to Phosphoserine. Residue H58 coordinates O2. Heme b is bound at residue H87. Residue S102 is modified to Phosphoserine. At T108 the chain carries Phosphothreonine. Phosphoserine is present on residues S124 and S131. A phosphothreonine mark is found at T134 and T137. S138 carries the post-translational modification Phosphoserine.

The protein belongs to the globin family. As to quaternary structure, heterotetramer of two alpha chains and two beta chains. In terms of tissue distribution, red blood cells.

Functionally, involved in oxygen transport from the lung to the various peripheral tissues. Its function is as follows. Hemopressin acts as an antagonist peptide of the cannabinoid receptor CNR1. Hemopressin-binding efficiently blocks cannabinoid receptor CNR1 and subsequent signaling. The polypeptide is Hemoglobin subunit alpha (HBA) (Semnopithecus entellus (Northern plains gray langur)).